Consider the following 142-residue polypeptide: Nucleoside diphosphate kinase (142 aa).

6 residues coordinate ATP: Lys11, Phe59, Arg87, Thr93, Arg104, and Asn114. His117 functions as the Pros-phosphohistidine intermediate in the catalytic mechanism.

This sequence belongs to the NDK family. As to quaternary structure, homotetramer. Requires Mg(2+) as cofactor.

Its subcellular location is the cytoplasm. The enzyme catalyses a 2'-deoxyribonucleoside 5'-diphosphate + ATP = a 2'-deoxyribonucleoside 5'-triphosphate + ADP. The catalysed reaction is a ribonucleoside 5'-diphosphate + ATP = a ribonucleoside 5'-triphosphate + ADP. Its function is as follows. Major role in the synthesis of nucleoside triphosphates other than ATP. The ATP gamma phosphate is transferred to the NDP beta phosphate via a ping-pong mechanism, using a phosphorylated active-site intermediate. This chain is Nucleoside diphosphate kinase, found in Wigglesworthia glossinidia brevipalpis.